The primary structure comprises 377 residues: Protein RecA (377 aa).

82-89 is an ATP binding site; sequence GPESSGKT. The interval 345 to 377 is disordered; the sequence is EGSEVSANSMRPLASAARQASSRPNLSQVSANG. Positions 362-377 are enriched in polar residues; sequence RQASSRPNLSQVSANG.

It belongs to the RecA family.

It is found in the cytoplasm. In terms of biological role, can catalyze the hydrolysis of ATP in the presence of single-stranded DNA, the ATP-dependent uptake of single-stranded DNA by duplex DNA, and the ATP-dependent hybridization of homologous single-stranded DNAs. It interacts with LexA causing its activation and leading to its autocatalytic cleavage. The polypeptide is Protein RecA (Prochlorococcus marinus (strain NATL2A)).